We begin with the raw amino-acid sequence, 236 residues long: Sensory rhodopsin II (236 aa).

7 helical membrane passes run 4–24 (ITTW…VLAY), 38–58 (LLLI…ALGF), 73–93 (YVDW…LAGA), 101–121 (LVVL…TPSP), 122–142 (VSYA…YLLY), 167–187 (FVVV…AGVG), and 196–216 (LVVV…ALLA). Residue lysine 206 is modified to N6-(retinylidene)lysine.

This sequence belongs to the archaeal/bacterial/fungal opsin family. Post-translationally, the covalent binding of retinal to the apoprotein, bacterioopsin, generates bacteriorhodopsin.

Its subcellular location is the membrane. Mediates the photorepellent response. The protein is Sensory rhodopsin II (sop2) of Haloarcula marismortui (strain ATCC 43049 / DSM 3752 / JCM 8966 / VKM B-1809) (Halobacterium marismortui).